The sequence spans 795 residues: Toll-like receptor 6 (795 aa).

Positions 1-27 (MSQDRKPIVGSFHFVCALALIVGSMTP) are cleaved as a signal peptide. The Extracellular portion of the chain corresponds to 28 to 584 (FSNELESMVD…FHMSPLSCDT (557 aa)). Asparagine 42 is a glycosylation site (N-linked (GlcNAc...) asparagine). LRR repeat units lie at residues 54–77 (TKALSLSQNSISELRMPDISFLSE), 78–101 (LRVLRLSHNRIRSLDFHVFLFNQD), 102–125 (LEYLDVSHNRLQNISCCPMASLRH), 126–150 (LDLSFNDFDVLPVCKEFGNLTKLTF), 151–175 (LGLSAAKFRQLDLLPVAHLHLSCIL), 176–199 (LDLVSYHIKGGETESLQIPNTTVL), 200–223 (HLVFHPNSLFSVQVNMSVNALGHL), 224–250 (QLSNIKLNDENCQRLMTFLSELTRGPT), 251–278 (LLNVTLQHIETTWKCSVKLFQFFWPRPV), 279–308 (EYLNIYNLTITERIDREEFTYSETALKSLM), 309–337 (IEHVKNQVFLFSKEALYSVFAEMNIKMLS), 338–361 (ISDTPFIHMVCPPSPSSFTFLNFT), 362–388 (QNVFTDSVFQGCSTLKRLQTLILQRNG), 389–414 (LKNFFKVALMTKNMSSLETLDVSLNS), 415–437 (LNSHAYDRTCAWAESILVLNLSS), 438–457 (NMLTGSVFRCLPPKVKVLDL), 458–478 (HNNRIMSIPKDVTHLQALQEL), 479–500 (NVASNSLTDLPGCGAFSSLSVL), and 501–524 (VIDHNSVSHPSEDFFQSCQNIRSL). An N-linked (GlcNAc...) asparagine glycan is attached at asparagine 114. Cysteine 117 and cysteine 139 are oxidised to a cystine. Residue asparagine 144 is glycosylated (N-linked (GlcNAc...) asparagine). Asparagine 195 and asparagine 214 each carry an N-linked (GlcNAc...) asparagine glycan. A disulfide bridge connects residues cysteine 235 and cysteine 265. 2 N-linked (GlcNAc...) asparagine glycosylation sites follow: asparagine 253 and asparagine 285. The cysteines at positions 348 and 373 are disulfide-linked. Asparagine 359 is a glycosylation site (N-linked (GlcNAc...) asparagine). Asparagine 401 and asparagine 434 each carry an N-linked (GlcNAc...) asparagine glycan. Cysteine 424 and cysteine 447 form a disulfide bridge. Positions 525–576 (TAGNNPFQCTCELRDFVKNIGWVAREVVEGWPDSYRCDYPESSKGTALRDFH) constitute an LRRCT domain. The chain crosses the membrane as a helical span at residues 585 to 605 (VLLTVTIGATMLVLAVTGAFL). The Cytoplasmic portion of the chain corresponds to 606 to 795 (CLYFDLPWYV…ALVNEDDVKT (190 aa)). The TIR domain maps to 640–781 (LQFHAFVSYS…LFWANLRASF (142 aa)).

This sequence belongs to the Toll-like receptor family. Homodimer (via cytoplasmic TIR domain). Heterodimer with TLR2 via their respective extracellular domains. Binds MYD88 via their respective TIR domains. Interacts with CD36, following CD36 stimulation by oxLDL or amyloid-beta 42, and forms a heterodimer with TLR4. The trimeric complex is internalized and triggers inflammatory response. LYN kinase activity facilitates TLR4:TLR6 heterodimerization and signal initiation. The heterodimer TLR2:TLR6 interacts with CD14 and CD36 in response to triacylated lipopeptides. As to expression, detected in thymus, spleen, ovary and lung. Expressed in macrohpages.

It localises to the cell membrane. Its subcellular location is the cytoplasmic vesicle. The protein resides in the phagosome membrane. The protein localises to the membrane raft. It is found in the golgi apparatus. Functionally, participates in the innate immune response to Gram-positive bacteria and fungi. Specifically recognizes diacylated and, to a lesser extent, triacylated lipopeptides. In response to diacylated lipopeptides, forms the activation cluster TLR2:TLR6:CD14:CD36, this cluster triggers signaling from the cell surface and subsequently is targeted to the Golgi in a lipid-raft dependent pathway. Acts via MYD88 and TRAF6, leading to NF-kappa-B activation, cytokine secretion and the inflammatory response. Recognizes mycoplasmal macrophage-activating lipopeptide-2kD (MALP-2), soluble tuberculosis factor (STF), phenol-soluble modulin (PSM) and B.burgdorferi outer surface protein A lipoprotein (OspA-L) cooperatively with TLR2. In complex with TLR4, promotes sterile inflammation in monocytes/macrophages in response to oxidized low-density lipoprotein (oxLDL) or amyloid-beta 42. In this context, the initial signal is provided by oxLDL- or amyloid-beta 42-binding to CD36. This event induces the formation of a heterodimer of TLR4 and TLR6, which is rapidly internalized and triggers inflammatory response, leading to the NF-kappa-B-dependent production of CXCL1, CXCL2 and CCL9 cytokines, via MYD88 signaling pathway, and CCL5 cytokine, via TICAM1 signaling pathway, as well as IL1B secretion. The chain is Toll-like receptor 6 (Tlr6) from Mus musculus (Mouse).